A 559-amino-acid chain; its full sequence is Cytokine-like nuclear factor N-PAC (559 aa).

Positions 9–70 (VNDLVWAKMK…ETQIKPYQEF (62 aa)) constitute a PWWP domain. Positions 106–137 (SEQDNRPDPDVEFNKLREGGTESGEETTVNNT) are disordered. Basic and acidic residues predominate over residues 108–125 (QDNRPDPDVEFNKLREGG). The dehydrogenase domain stretch occupies residues 267–559 (RNIQASNLKF…SSAVYVRARF (293 aa)). Residues 277–291 (GFLG…MVKN) and Lys-511 contribute to the NAD(+) site.

It belongs to the HIBADH-related family. NP60 subfamily. As to quaternary structure, binds to mononucleosomes.

It is found in the chromosome. In terms of biological role, nucleosome-destabilizing factor that is recruited to genes during transcriptional activation and colocalizes with a subset of trimethylated 'Lys-36' histone H3 (H3K36me3)-enriched regions. The polypeptide is Cytokine-like nuclear factor N-PAC (Aedes aegypti (Yellowfever mosquito)).